Consider the following 514-residue polypeptide: MELSWGRAFWRNFLGQSPDWYKLALIAFLIANPLIFFINPFVAGWLLVAEFIFTLAMALKCYPLLPGGLLAIEAVIIGMTSAAHVREEVAANLEVLLLLMFMVAGIYFMKQLLLFIFTRLLLSIRSKMLLSLAFCMAAAFLSAFLDALTVVAVVISVAVGFYGIYHRVASARGEENDLQDDDHLDQNSKAVLEQFRGFLRSLMMHAGVGTALGGVMTMVGEPQNLIIAKAAGWHFGDFFLRMSPVTVPVLICGLFTCVLVEKLRWFGYGETLPEKVRHILQEFDDQSRQRRTRQDKLNLFVQAIIGVWLVTALALHLAEVGLIGLSVIILATSLTGVTDEHAIGKAFTESLPFTALLTVFFSIVAVIIDQHLFAPIIQFVLQASEHAQLTLFYLFNGLLSSISDNVFVGTIYINEAKAAMESGAISMKQYELLAVAINTGTNLPSVATPNGQAAFLFLLTSALAPLIRLSYGRMVWMALPYTLVLTLVGLLCVEFTLTPITEWMTQSGWLATFS.

A run of 12 helical transmembrane segments spans residues Leu-23–Ala-43, Pro-63–Ala-83, Leu-97–Phe-117, Leu-120–Phe-140, Phe-144–Ile-164, Leu-202–Pro-222, Phe-238–Val-258, Ala-303–Ile-323, Leu-357–Ile-377, Leu-391–Ile-411, Ala-447–Ile-467, and Val-475–Phe-495.

Belongs to the NhaB Na(+)/H(+) (TC 2.A.34) antiporter family.

The protein localises to the cell inner membrane. It catalyses the reaction 2 Na(+)(in) + 3 H(+)(out) = 2 Na(+)(out) + 3 H(+)(in). Na(+)/H(+) antiporter that extrudes sodium in exchange for external protons. The sequence is that of Na(+)/H(+) antiporter NhaB from Citrobacter koseri (strain ATCC BAA-895 / CDC 4225-83 / SGSC4696).